The following is a 155-amino-acid chain: Large ribosomal subunit protein eL24 (155 aa).

The tract at residues 87–155 (LELIKERRSQ…SFQKVKATSR (69 aa)) is disordered. Residues 89–129 (LIKERRSQKPSDRKAARDSKLAKDKEAKKAAKAARKAEKAK) are compositionally biased toward basic and acidic residues. The segment covering 130-143 (AVASGASVVSKQQA) has biased composition (low complexity).

This sequence belongs to the eukaryotic ribosomal protein eL24 family. In terms of assembly, component of the large ribosomal subunit. Mature ribosomes consist of a small (40S) and a large (60S) subunit. The 40S subunit contains about 32 different proteins and 1 molecule of RNA (18S). The 60S subunit contains 45 different proteins and 3 molecules of RNA (25S, 5.8S and 5S).

The protein localises to the cytoplasm. Component of the ribosome, a large ribonucleoprotein complex responsible for the synthesis of proteins in the cell. The small ribosomal subunit (SSU) binds messenger RNAs (mRNAs) and translates the encoded message by selecting cognate aminoacyl-transfer RNA (tRNA) molecules. The large subunit (LSU) contains the ribosomal catalytic site termed the peptidyl transferase center (PTC), which catalyzes the formation of peptide bonds, thereby polymerizing the amino acids delivered by tRNAs into a polypeptide chain. The nascent polypeptides leave the ribosome through a tunnel in the LSU and interact with protein factors that function in enzymatic processing, targeting, and the membrane insertion of nascent chains at the exit of the ribosomal tunnel. In Candida albicans (strain SC5314 / ATCC MYA-2876) (Yeast), this protein is Large ribosomal subunit protein eL24.